A 393-amino-acid chain; its full sequence is Probable tRNA sulfurtransferase (393 aa).

A THUMP domain is found at 61-168 (DEVIESLTRV…GDVINIYSIE (108 aa)). ATP is bound by residues 186 to 187 (LL), 211 to 212 (YF), arginine 268, glycine 290, and glutamine 299.

Belongs to the ThiI family.

The protein resides in the cytoplasm. The catalysed reaction is [ThiI sulfur-carrier protein]-S-sulfanyl-L-cysteine + a uridine in tRNA + 2 reduced [2Fe-2S]-[ferredoxin] + ATP + H(+) = [ThiI sulfur-carrier protein]-L-cysteine + a 4-thiouridine in tRNA + 2 oxidized [2Fe-2S]-[ferredoxin] + AMP + diphosphate. The enzyme catalyses [ThiS sulfur-carrier protein]-C-terminal Gly-Gly-AMP + S-sulfanyl-L-cysteinyl-[cysteine desulfurase] + AH2 = [ThiS sulfur-carrier protein]-C-terminal-Gly-aminoethanethioate + L-cysteinyl-[cysteine desulfurase] + A + AMP + 2 H(+). It functions in the pathway cofactor biosynthesis; thiamine diphosphate biosynthesis. In terms of biological role, catalyzes the ATP-dependent transfer of a sulfur to tRNA to produce 4-thiouridine in position 8 of tRNAs, which functions as a near-UV photosensor. Also catalyzes the transfer of sulfur to the sulfur carrier protein ThiS, forming ThiS-thiocarboxylate. This is a step in the synthesis of thiazole, in the thiamine biosynthesis pathway. The sulfur is donated as persulfide by IscS. This Lachnospira eligens (strain ATCC 27750 / DSM 3376 / VPI C15-48 / C15-B4) (Eubacterium eligens) protein is Probable tRNA sulfurtransferase.